A 216-amino-acid polypeptide reads, in one-letter code: Probable GTP-binding protein EngB (216 aa).

Positions 27–201 constitute an EngB-type G domain; the sequence is GGVEIAFAGR…AQTLTGWYLA (175 aa). Residues 35-42, 62-66, 80-83, 147-150, and 180-182 contribute to the GTP site; these read GRSNAGKS, GRTQL, DLPG, TKAD, and FSS. Residues S42 and T64 each contribute to the Mg(2+) site.

Belongs to the TRAFAC class TrmE-Era-EngA-EngB-Septin-like GTPase superfamily. EngB GTPase family. The cofactor is Mg(2+).

In terms of biological role, necessary for normal cell division and for the maintenance of normal septation. The sequence is that of Probable GTP-binding protein EngB from Aeromonas hydrophila subsp. hydrophila (strain ATCC 7966 / DSM 30187 / BCRC 13018 / CCUG 14551 / JCM 1027 / KCTC 2358 / NCIMB 9240 / NCTC 8049).